The chain runs to 609 residues: Elongation factor 4 (609 aa).

Residues 11–193 (SRIRNFSIIA…QIVEKVPAPS (183 aa)) form the tr-type G domain. GTP contacts are provided by residues 23–28 (DHGKST) and 140–143 (NKID).

Belongs to the TRAFAC class translation factor GTPase superfamily. Classic translation factor GTPase family. LepA subfamily.

It is found in the cell membrane. The enzyme catalyses GTP + H2O = GDP + phosphate + H(+). Its function is as follows. Required for accurate and efficient protein synthesis under certain stress conditions. May act as a fidelity factor of the translation reaction, by catalyzing a one-codon backward translocation of tRNAs on improperly translocated ribosomes. Back-translocation proceeds from a post-translocation (POST) complex to a pre-translocation (PRE) complex, thus giving elongation factor G a second chance to translocate the tRNAs correctly. Binds to ribosomes in a GTP-dependent manner. The protein is Elongation factor 4 of Halalkalibacterium halodurans (strain ATCC BAA-125 / DSM 18197 / FERM 7344 / JCM 9153 / C-125) (Bacillus halodurans).